The sequence spans 275 residues: NH(3)-dependent NAD(+) synthetase (275 aa).

39 to 46 provides a ligand contact to ATP; the sequence is GLSGGVDS. Residue aspartate 45 coordinates Mg(2+). Arginine 124 is a binding site for deamido-NAD(+). ATP is bound at residue threonine 144. Glutamate 149 is a Mg(2+) binding site. Residues lysine 157 and aspartate 164 each coordinate deamido-NAD(+). Lysine 173 and serine 195 together coordinate ATP. 255–256 contacts deamido-NAD(+); the sequence is HK.

This sequence belongs to the NAD synthetase family. In terms of assembly, homodimer.

It catalyses the reaction deamido-NAD(+) + NH4(+) + ATP = AMP + diphosphate + NAD(+) + H(+). The protein operates within cofactor biosynthesis; NAD(+) biosynthesis; NAD(+) from deamido-NAD(+) (ammonia route): step 1/1. Functionally, catalyzes the ATP-dependent amidation of deamido-NAD to form NAD. Uses ammonia as a nitrogen source. The chain is NH(3)-dependent NAD(+) synthetase from Staphylothermus marinus (strain ATCC 43588 / DSM 3639 / JCM 9404 / F1).